A 141-amino-acid chain; its full sequence is MSLSIEQIMEIIPHRYPMLLVDRVEEIEPGKRAVGYKNVTFNEQIFQGHYPGKPIMPGVLMIEALAQLGGVAILSLDKYKGKKPILGAVKNAKFRRMVVPGDVLKLEIEIVKVKGPAGIGKGIATVNGEKAVEAEITFMIV.

His49 is a catalytic residue.

It belongs to the thioester dehydratase family. FabZ subfamily.

The protein resides in the cytoplasm. It carries out the reaction a (3R)-hydroxyacyl-[ACP] = a (2E)-enoyl-[ACP] + H2O. In terms of biological role, involved in unsaturated fatty acids biosynthesis. Catalyzes the dehydration of short chain beta-hydroxyacyl-ACPs and long chain saturated and unsaturated beta-hydroxyacyl-ACPs. The polypeptide is 3-hydroxyacyl-[acyl-carrier-protein] dehydratase FabZ (Clostridium acetobutylicum (strain ATCC 824 / DSM 792 / JCM 1419 / IAM 19013 / LMG 5710 / NBRC 13948 / NRRL B-527 / VKM B-1787 / 2291 / W)).